The primary structure comprises 1385 residues: Kinesin-like protein KIF15 (1385 aa).

The tract at residues 1-24 (MAPGCKSELRNVTNSHSNQPSNED) is disordered. A compositionally biased stretch (polar residues) spans 10 to 21 (RNVTNSHSNQPS). Residues 26 to 363 (AIKVFVRIRP…LNFAQRAKLI (338 aa)) form the Kinesin motor domain. An ATP-binding site is contributed by 109–116 (GQTGSGKT). Residues 368–1385 (VVNEDTQGNV…NVFLKERKKE (1018 aa)) are a coiled coil. Position 1007 is an N6-acetyllysine (Lys1007). A phosphoserine mark is found at Ser1139 and Ser1167. The disordered stretch occupies residues 1222 to 1243 (DMKRQGESSSQSRPDSQQLKNE). Residues 1228 to 1241 (ESSSQSRPDSQQLK) are compositionally biased toward polar residues.

It belongs to the TRAFAC class myosin-kinesin ATPase superfamily. Kinesin family. KLP2 subfamily. Interacts with MKI67 and TPX2. As to expression, expressed in sympathetic neurons.

Its subcellular location is the cytoplasm. It localises to the cytoskeleton. The protein localises to the spindle. Plus-end directed kinesin-like motor enzyme involved in mitotic spindle assembly. This Rattus norvegicus (Rat) protein is Kinesin-like protein KIF15 (Kif15).